The chain runs to 631 residues: Chaperone protein DnaK (631 aa).

Residue T198 is modified to Phosphothreonine; by autocatalysis. The segment at 602-631 (EAAGGAQQAGKDDVVDAEFTEVDDDKKKSA) is disordered.

It belongs to the heat shock protein 70 family.

In terms of biological role, acts as a chaperone. The sequence is that of Chaperone protein DnaK from Rhodopseudomonas palustris (strain ATCC BAA-98 / CGA009).